An 812-amino-acid chain; its full sequence is MGNYGTNIDRKWQNKWEDSNLYHFDTNNLDKKLYVLEMFSYPSGSNLHAGHWFNYGPSDSWARFKRMQGFNVFQPMGFDSFGLPAENYAIKTGVHPKDSTMKNIETMTKQLKSMGAMFHWDNEVITSEPEYYKWTQWMFLQLYKNNLAYRKNAPVNWCPSCNTVLANEQVLDGACERCSSDVIKKDLTQWFFKITDYAEELLEKLDDLDWPENTKSMQKHWIGKSIGAQLTFKIVDSDLSFDIFTTRADTLFGVTYAVLAPENPLVDKITKEDHKAEIEAYKEQAKKQSEIERQSITREKTGVFTGSYAINPINGKKVPVWVGDYVLSTYGTGAVMAVPAHDERDFEFAKKHNLPIEKVIEGGETLPYTEDGIMINSEEFNGLESSKGRSAVVEKLEKENLGVKKINYRLRDWLVSRQRYWGAPIPIVYCDKCGTVAVPEEQLPVKLPYDVEFTPDGKSPLSKCDSFVNTTCPTCGGPAKREVDTLDTFVCSSWYFLRYADNKNSEKAFDPKIINEILPVDKYVGGPEHACMHLLYARFFTKALRDMGYLNFDEPFSSLTHQGLILGPDGLKMSKSKGNTISPDDYIDEFGSDVFRMYLMFGFDYTEGGAWSDEGIKSVSRFVDRVERTLASCRYYINNPSDDKITIDNNEKDLNFVRHNSIKSITEDAEKMQFNTCIARLMEYTNALSKYINEDNKNSKFLKECVEDFIILIAPFAPHFSEEQWELLGMTYSVFNEKWPQFDSKALVKDEIEIAVQVNGKIRDRITIASGLDEESIKETALNSEDVKKYTDGKNIVKIIIIKGRLVNIVVK.

Residues 40 to 51 (SYPSGSNLHAGH) carry the 'HIGH' region motif. Residues 572 to 576 (KMSKS) carry the 'KMSKS' region motif. Lysine 575 provides a ligand contact to ATP.

The protein belongs to the class-I aminoacyl-tRNA synthetase family.

Its subcellular location is the cytoplasm. It catalyses the reaction tRNA(Leu) + L-leucine + ATP = L-leucyl-tRNA(Leu) + AMP + diphosphate. This is Leucine--tRNA ligase from Clostridium tetani (strain Massachusetts / E88).